Here is a 296-residue protein sequence, read N- to C-terminus: tRNA uridine(34) hydroxylase (296 aa).

Residues 121–215 (AQPDVAVIDT…YLEDIPQDQS (95 aa)) enclose the Rhodanese domain. Catalysis depends on Cys175, which acts as the Cysteine persulfide intermediate.

It belongs to the TrhO family.

The catalysed reaction is uridine(34) in tRNA + AH2 + O2 = 5-hydroxyuridine(34) in tRNA + A + H2O. Functionally, catalyzes oxygen-dependent 5-hydroxyuridine (ho5U) modification at position 34 in tRNAs. This Roseobacter denitrificans (strain ATCC 33942 / OCh 114) (Erythrobacter sp. (strain OCh 114)) protein is tRNA uridine(34) hydroxylase.